Here is a 256-residue protein sequence, read N- to C-terminus: Probable galactose dehydrogenase GalD (256 aa).

NAD(+) contacts are provided by residues 20 to 23 (GGGS), 71 to 72 (DL), and N98. Substrate is bound at residue S150. The active-site Proton acceptor is the Y163. Residues 163 to 167 (YSTAK) and I196 contribute to the NAD(+) site.

This sequence belongs to the short-chain dehydrogenases/reductases (SDR) family.

In terms of biological role, involved in the degradation of galactose via the DeLey-Doudoroff pathway. Catalyzes the oxidation of galactose in the presence of NAD(+). Uses NAD(+) as a hydrogen acceptor more efficiently than NADP(+). In Rhizobium meliloti (strain 1021) (Ensifer meliloti), this protein is Probable galactose dehydrogenase GalD (galD).